Here is a 481-residue protein sequence, read N- to C-terminus: Replication factor C large subunit (481 aa).

Residue 43-50 (GKPGIGKT) coordinates ATP. 2 stretches are compositionally biased toward basic and acidic residues: residues 408–433 (KVER…KDAD) and 441–457 (VPKE…ERPA). The disordered stretch occupies residues 408 to 481 (KVEREKEPEP…HNQSTLFDGF (74 aa)). The segment covering 471–481 (AHNQSTLFDGF) has biased composition (polar residues).

This sequence belongs to the activator 1 small subunits family. RfcL subfamily. Heteromultimer composed of small subunits (RfcS) and large subunits (RfcL).

In terms of biological role, part of the RFC clamp loader complex which loads the PCNA sliding clamp onto DNA. This Methanoregula boonei (strain DSM 21154 / JCM 14090 / 6A8) protein is Replication factor C large subunit.